The following is a 396-amino-acid chain: Elongation factor Tu (396 aa).

In terms of domain architecture, tr-type G spans 10-206 (KPHVNVGTIG…VLDTYIPEPE (197 aa)). The interval 19-26 (GHVDHGKT) is G1. 19-26 (GHVDHGKT) contacts GTP. Threonine 26 is a binding site for Mg(2+). Residues 60–64 (GITIN) form a G2 region. A G3 region spans residues 81-84 (DCPG). GTP contacts are provided by residues 81 to 85 (DCPGH) and 136 to 139 (NKCD). A G4 region spans residues 136-139 (NKCD). A G5 region spans residues 174 to 176 (SAT).

It belongs to the TRAFAC class translation factor GTPase superfamily. Classic translation factor GTPase family. EF-Tu/EF-1A subfamily. In terms of assembly, monomer.

The protein localises to the cytoplasm. It catalyses the reaction GTP + H2O = GDP + phosphate + H(+). GTP hydrolase that promotes the GTP-dependent binding of aminoacyl-tRNA to the A-site of ribosomes during protein biosynthesis. The chain is Elongation factor Tu from Psychrobacter arcticus (strain DSM 17307 / VKM B-2377 / 273-4).